Here is a 519-residue protein sequence, read N- to C-terminus: Tachykinin-like peptides receptor 99D (519 aa).

The Extracellular segment spans residues 1-100 (MENRSDFEAD…SFAFVVPWWR (100 aa)). 4 N-linked (GlcNAc...) asparagine glycosylation sites follow: asparagine 3, asparagine 19, asparagine 22, and asparagine 61. The chain crosses the membrane as a helical span at residues 101–123 (QVLWSILFGGMVIVATGGNLIVV). The Cytoplasmic portion of the chain corresponds to 124–134 (WIVMTTKRMRT). A helical membrane pass occupies residues 135–155 (VTNYFIVNLSIADAMVSSLNV). Residues 156-175 (TFNYYYMLDSDWPFGEFYCK) are Extracellular-facing. Residues cysteine 174 and cysteine 254 are joined by a disulfide bond. The helical transmembrane segment at 176-197 (LSQFIAMLSICASVFTLMAISI) threads the bilayer. Residues 198-217 (DRYVAIIRPLQPRMSKRCNL) are Cytoplasmic-facing. The helical transmembrane segment at 218–238 (AIAAVIWLASTLISCPMMIIY) threads the bilayer. The Extracellular segment spans residues 239-270 (RTEEVPVRGLSNRTVCYPEWPDGPTNHSTMES). A helical membrane pass occupies residues 271 to 292 (LYNILIIILTYFLPIVSMTVTY). The Cytoplasmic portion of the chain corresponds to 293–324 (SRVGIELWGSKTIGECTPRQVENVRSKRRVVK). The chain crosses the membrane as a helical span at residues 325 to 346 (MMIVVVLIFAICWLPFHSYFII). The Extracellular segment spans residues 347 to 361 (TSCYPAITEAPFIQE). A helical transmembrane segment spans residues 362–384 (LYLAIYWLAMSNSMYNPIIYCWM). The Cytoplasmic segment spans residues 385-519 (NSRFRYGFKM…STANTTQLLS (135 aa)). The S-palmitoyl cysteine moiety is linked to residue cysteine 399. Positions 444-519 (PSSPKSHRIS…STANTTQLLS (76 aa)) are disordered. 2 stretches are compositionally biased toward polar residues: residues 454–465 (HSGTGRSATLRN) and 487–499 (SYQQEMQQRWSGP). The span at 500–519 (NSATAVTNSSSTANTTQLLS) shows a compositional bias: low complexity.

The protein belongs to the G-protein coupled receptor 1 family. During late embryogenesis (stages 11-15), expressed in the brain and in a specific subset of neurons in each neuromere of the developing ventral ganglion. Expressed in the cortex of the adult brain, which contains the neuronal cell bodies.

The protein resides in the cell membrane. Its function is as follows. Receptor for tachykinin-like peptides. The protein is Tachykinin-like peptides receptor 99D (TkR99D) of Drosophila melanogaster (Fruit fly).